Consider the following 1215-residue polypeptide: Homeodomain-interacting protein kinase 3 (1215 aa).

Lys27 participates in a covalent cross-link: Glycyl lysine isopeptide (Lys-Gly) (interchain with G-Cter in SUMO2). One can recognise a Protein kinase domain in the interval Tyr197–Val525. ATP is bound by residues Leu203–Val211 and Lys226. Asp322 serves as the catalytic Proton acceptor. A Phosphotyrosine modification is found at Tyr359. Residues Gln767 to Ser944 form an interaction with AR region. The tract at residues Asn796–Lys891 is interaction with FAS. A required for localization to nuclear speckles region spans residues Gln855 to Met1011. Positions Ala866–Leu918 are SUMO interaction motifs (SIM); required for nuclear localization and kinase activity. The segment at Ile870–Glu880 is interaction with UBL1. Positions Ser912–Ser929 are enriched in low complexity. The segment at Ser912–Thr987 is disordered. Over residues Ser945–Ser957 the composition is skewed to polar residues. Residue Lys1208 forms a Glycyl lysine isopeptide (Lys-Gly) (interchain with G-Cter in SUMO) linkage.

The protein belongs to the protein kinase superfamily. CMGC Ser/Thr protein kinase family. HIPK subfamily. In terms of assembly, interacts with Nkx1-2. Interacts with FAS and DAXX. Probably part of a complex consisting of HIPK3, FAS and FADD. Interacts with and stabilizes ligand-bound androgen receptor (AR). Interacts with UBL1/SUMO-1. Binds to NR5A1/SF1, SPEN/MINT and RUNX2. In terms of processing, autophosphorylated, but autophosphorylation is not required for catalytic activity. May be sumoylated. Overexpressed in multidrug resistant cells. Highly expressed in heart and skeletal muscle, and at lower levels in placenta, pancreas, brain, spleen, prostate, thymus, testis, small intestine, colon and leukocytes. Not found in liver and lung.

The protein localises to the cytoplasm. It is found in the nucleus. The enzyme catalyses L-seryl-[protein] + ATP = O-phospho-L-seryl-[protein] + ADP + H(+). It catalyses the reaction L-threonyl-[protein] + ATP = O-phospho-L-threonyl-[protein] + ADP + H(+). Functionally, serine/threonine-protein kinase involved in transcription regulation, apoptosis and steroidogenic gene expression. Phosphorylates JUN and RUNX2. Seems to negatively regulate apoptosis by promoting FADD phosphorylation. Enhances androgen receptor-mediated transcription. May act as a transcriptional corepressor for NK homeodomain transcription factors. The phosphorylation of NR5A1 activates SF1 leading to increased steroidogenic gene expression upon cAMP signaling pathway stimulation. In osteoblasts, supports transcription activation: phosphorylates RUNX2 that synergizes with SPEN/MINT to enhance FGFR2-mediated activation of the osteocalcin FGF-responsive element (OCFRE). In Homo sapiens (Human), this protein is Homeodomain-interacting protein kinase 3 (HIPK3).